The following is a 198-amino-acid chain: Angiopoietin-like protein 8 (198 aa).

A signal peptide spans methionine 1–alanine 15.

The protein belongs to the ANGPTL8 family. Interacts with ANGPTL3. In terms of processing, proteolytically cleaved at the N-terminus. Expressed in liver and fat. Enriched in white and brown adipose tissues.

It localises to the secreted. Hormone that acts as a blood lipid regulator by regulating serum triglyceride levels. May be involved in the metabolic transition between fasting and refeeding: required to direct fatty acids to adipose tissue for storage in the fed state. According to a report, may act by promoting ANGPTL3 cleavage. According to another study, not required for cleavage of ANGPTL3. This Mus musculus (Mouse) protein is Angiopoietin-like protein 8.